Consider the following 418-residue polypeptide: Putative L-glutamine:3-amino-2,3-dideoxy-scyllo-inosose aminotransferase (418 aa).

Position 199 is an N6-(pyridoxal phosphate)lysine (lysine 199).

The protein belongs to the DegT/DnrJ/EryC1 family. L-glutamine:2-deoxy-scyllo-inosose/scyllo-inosose aminotransferase subfamily. Pyridoxal 5'-phosphate is required as a cofactor.

The enzyme catalyses 3-amino-2,3-dideoxy-scyllo-inosose + L-glutamine = 2-deoxystreptamine + 2-oxoglutaramate. It participates in metabolic intermediate biosynthesis; 2-deoxystreptamine biosynthesis; 2-deoxystreptamine from D-glucose 6-phosphate: step 4/4. The protein operates within antibiotic biosynthesis; gentamicin biosynthesis. In terms of biological role, catalyzes the transamination of 3-amino-2,3-dideoxy-scyllo-inosose (amino-DOI) into 2-deoxystreptamine (DOS). This chain is Putative L-glutamine:3-amino-2,3-dideoxy-scyllo-inosose aminotransferase (gtmD), found in Micromonospora echinospora (Micromonospora purpurea).